A 663-amino-acid polypeptide reads, in one-letter code: Alcohol oxidase 2 (663 aa).

Residue 8 to 38 (DILVLGGGSSGSCIAGRLANLDHSLKVGLIE) participates in FAD binding. His567 serves as the catalytic Proton acceptor. The Microbody targeting signal motif lies at 661–663 (ARF).

Belongs to the GMC oxidoreductase family. In terms of assembly, homooctamer. FAD serves as cofactor.

The protein resides in the peroxisome matrix. It carries out the reaction a primary alcohol + O2 = an aldehyde + H2O2. The protein operates within energy metabolism; methane degradation. Functionally, minor isoform of alcohol oxidase, which catalyzes the oxidation of methanol to formaldehyde and hydrogen peroxide, the first step in the methanol utilization pathway of methylotrophic yeasts. This is Alcohol oxidase 2 (AOX2) from Komagataella phaffii (strain ATCC 76273 / CBS 7435 / CECT 11047 / NRRL Y-11430 / Wegner 21-1) (Yeast).